Consider the following 375-residue polypeptide: Chanoclavine-I aldehyde reductase ifgG (375 aa).

Residues 31 to 33 (PTT), A66, Q108, and H176 contribute to the FMN site. Positions 176 and 179 each coordinate substrate. Catalysis depends on Y181, which acts as the Proton donor. FMN is bound by residues K228, G300, 325 to 326 (GR), and R326. Y353 provides a ligand contact to substrate.

Belongs to the NADH:flavin oxidoreductase/NADH oxidase family. The cofactor is FMN.

It carries out the reaction dihydrochanoclavine-I aldehyde + NADP(+) = chanoclavine-I aldehyde + NADPH + H(+). It participates in alkaloid biosynthesis; ergot alkaloid biosynthesis. In terms of biological role, chanoclavine-I aldehyde reductase; part of the gene cluster that mediates the biosynthesis of isofumigaclavines, fungal ergot alkaloids. The tryptophan dimethylallyltransferase ifgA catalyzes the first step of ergot alkaloid biosynthesis by condensing dimethylallyl diphosphate (DMAP) and tryptophan to form 4-dimethylallyl-L-tryptophan. The second step is catalyzed by the methyltransferase ifgB that methylates 4-dimethylallyl-L-tryptophan in the presence of S-adenosyl-L-methionine, resulting in the formation of N-methyl-dimethylallyl-L-tryptophan. The catalase ifgD and the FAD-dependent oxidoreductase ifgC then transform N-methyl-dimethylallyl-L-tryptophan to chanoclavine-I which is further oxidized by ifgE in the presence of NAD(+), resulting in the formation of chanoclavine-I aldehyde. The chanoclavine-I aldehyde reductases ifgG and/or fgaOx3 reduce chanoclavine-I aldehyde to dihydrochanoclavine-I aldehyde that spontaneously dehydrates to form 6,8-dimethyl-6,7-didehydroergoline. The festuclavine dehydrogenases ifgF1 and/or ifgF2 then catalyze the reduction of 6,8-dimethyl-6,7-didehydroergoline to form festuclavine. Hydrolysis of festuclavine by a yet undetermined cytochrome P450 monooxygenase (called ifgH) then leads to the formation of isofumigaclavine B which is in turn acetylated by ifgI to isofumigaclavine A. Penicillium roqueforti has interestingly at least two sets of genes for the consumption of chanoclavine-I aldehyde on three different loci, the OYEs ifgG/fgaOx3 and the festuclavine synthase homologs ifgF1/ifgF2. The reason for the duplication of these genes is unclear, probably to ensure the conversion of chanoclavine-I aldehyde by differential gene expression under various environmental conditions. The protein is Chanoclavine-I aldehyde reductase ifgG of Penicillium roqueforti (strain FM164).